The sequence spans 38 residues: Toxin Lqh 8/6 (38 aa).

Disulfide bonds link Cys2-Cys19, Cys5-Cys28, Cys16-Cys33, and Cys20-Cys35.

Expressed by the venom gland.

It localises to the secreted. Toxin with unknown function in healthy organisms. On glioma cells, interacts with chloride channels (probably ClC-3/CLCN3) and MMP2 at the surface of glioma cells. This complex is then internalized via caveolae, thus inhibiting the chloride channels necessary for cell shrinkage and tumor propagation. The chain is Toxin Lqh 8/6 from Leiurus hebraeus (Hebrew deathstalker scorpion).